We begin with the raw amino-acid sequence, 380 residues long: Probable RAD2-like endonuclease 076L (380 aa).

The tract at residues 1–101 is N-domain; the sequence is MGIKNLTQFL…QKIVSKTDAI (101 aa). Residues aspartate 32, glutamate 73, glutamate 191, glutamate 193, aspartate 212, aspartate 214, and aspartate 281 each coordinate Mg(2+). An I-domain region spans residues 156 to 301; sequence IDRRRKYEFS…EKAYKYISDY (146 aa).

The protein belongs to the XPG/RAD2 endonuclease family. Mg(2+) serves as cofactor.

The protein localises to the host nucleus. Its function is as follows. Probable endonuclease. This chain is Probable RAD2-like endonuclease 076L, found in Invertebrate iridescent virus 3 (IIV-3).